The sequence spans 433 residues: tRNA-2-methylthio-N(6)-dimethylallyladenosine synthase (433 aa).

The 116-residue stretch at 4 to 119 (KKLFIQTLGC…ITQAIKTPKF (116 aa)) folds into the MTTase N-terminal domain. [4Fe-4S] cluster-binding residues include C13, C50, C82, C151, C155, and C158. The Radical SAM core domain occupies 137–370 (RNSIYKSYIN…QNRHSEILDE (234 aa)). Residues 373-433 (KKQENKTFKV…KRMVLYGEIV (61 aa)) form the TRAM domain.

It belongs to the methylthiotransferase family. MiaB subfamily. As to quaternary structure, monomer. The cofactor is [4Fe-4S] cluster.

The protein localises to the cytoplasm. It carries out the reaction N(6)-dimethylallyladenosine(37) in tRNA + (sulfur carrier)-SH + AH2 + 2 S-adenosyl-L-methionine = 2-methylsulfanyl-N(6)-dimethylallyladenosine(37) in tRNA + (sulfur carrier)-H + 5'-deoxyadenosine + L-methionine + A + S-adenosyl-L-homocysteine + 2 H(+). Catalyzes the methylthiolation of N6-(dimethylallyl)adenosine (i(6)A), leading to the formation of 2-methylthio-N6-(dimethylallyl)adenosine (ms(2)i(6)A) at position 37 in tRNAs that read codons beginning with uridine. This is tRNA-2-methylthio-N(6)-dimethylallyladenosine synthase from Campylobacter jejuni (strain RM1221).